We begin with the raw amino-acid sequence, 126 residues long: Glycine cleavage system H protein (126 aa).

The Lipoyl-binding domain maps to 22 to 104; the sequence is TVTIGITEYA…YEKAWMVKVE (83 aa). At Lys-63 the chain carries N6-lipoyllysine.

The protein belongs to the GcvH family. In terms of assembly, the glycine cleavage system is composed of four proteins: P, T, L and H. It depends on (R)-lipoate as a cofactor.

In terms of biological role, the glycine cleavage system catalyzes the degradation of glycine. The H protein shuttles the methylamine group of glycine from the P protein to the T protein. Functionally, is also involved in protein lipoylation via its role as an octanoyl/lipoyl carrier protein intermediate. The chain is Glycine cleavage system H protein from Staphylococcus haemolyticus (strain JCSC1435).